Reading from the N-terminus, the 246-residue chain is DNA repair protein RecO (246 aa).

Belongs to the RecO family.

In terms of biological role, involved in DNA repair and RecF pathway recombination. The sequence is that of DNA repair protein RecO from Pelobacter propionicus (strain DSM 2379 / NBRC 103807 / OttBd1).